Reading from the N-terminus, the 182-residue chain is A-type ATP synthase subunit E (182 aa).

Belongs to the V-ATPase E subunit family. Has multiple subunits with at least A(3), B(3), C, D, E, F, H, I and proteolipid K(x).

It localises to the cell membrane. Its function is as follows. Component of the A-type ATP synthase that produces ATP from ADP in the presence of a proton gradient across the membrane. The chain is A-type ATP synthase subunit E from Methanothrix thermoacetophila (strain DSM 6194 / JCM 14653 / NBRC 101360 / PT) (Methanosaeta thermophila).